Here is a 71-residue protein sequence, read N- to C-terminus: Transcription modulator YdgT (71 aa).

It belongs to the Hha/YmoA/Cnu family. Forms complexes with both H-NS and StpA.

Binds to H-NS and modified the range of genes it silences; H-NS alonge silences core gene while the H-NS-Hha complex (and presumably also H-NS-YdgT) silences genes acquired by horizontal gene transfer. Plays a role silencing virulence factors in the absence of factors that induce pathogenicity. The complex formed with H-NS binds to the specific 26-bp cnb site in the origin of replication oriC. The sequence is that of Transcription modulator YdgT (ydgT) from Salmonella choleraesuis (strain SC-B67).